The chain runs to 211 residues: Uracil phosphoribosyltransferase (211 aa).

Residues Arg-78, Arg-103, and 130–138 each bind 5-phospho-alpha-D-ribose 1-diphosphate; that span reads DPMLATGGT. Uracil-binding positions include Ile-195 and 200–202; that span reads GDA. Asp-201 lines the 5-phospho-alpha-D-ribose 1-diphosphate pocket.

This sequence belongs to the UPRTase family. The cofactor is Mg(2+).

It carries out the reaction UMP + diphosphate = 5-phospho-alpha-D-ribose 1-diphosphate + uracil. The protein operates within pyrimidine metabolism; UMP biosynthesis via salvage pathway; UMP from uracil: step 1/1. Its activity is regulated as follows. Allosterically activated by GTP. Its function is as follows. Catalyzes the conversion of uracil and 5-phospho-alpha-D-ribose 1-diphosphate (PRPP) to UMP and diphosphate. The chain is Uracil phosphoribosyltransferase from Streptomyces avermitilis (strain ATCC 31267 / DSM 46492 / JCM 5070 / NBRC 14893 / NCIMB 12804 / NRRL 8165 / MA-4680).